Here is a 60-residue protein sequence, read N- to C-terminus: Small ribosomal subunit protein eS31 (60 aa).

Residues C24, C27, C42, and C45 each coordinate Zn(2+). A C4-type zinc finger spans residues 24-45 (CPRCGPGVFMADHGNRYACGRC).

The protein belongs to the eukaryotic ribosomal protein eS31 family. As to quaternary structure, part of the 30S ribosomal subunit. Requires Zn(2+) as cofactor.

This chain is Small ribosomal subunit protein eS31, found in Methanopyrus kandleri (strain AV19 / DSM 6324 / JCM 9639 / NBRC 100938).